The chain runs to 260 residues: Small ribosomal subunit protein eS4 (260 aa).

The region spanning 46-111 (VPLLILVRDM…RYRVVMNEHH (66 aa)) is the S4 RNA-binding domain.

It belongs to the eukaryotic ribosomal protein eS4 family.

This chain is Small ribosomal subunit protein eS4, found in Methanopyrus kandleri (strain AV19 / DSM 6324 / JCM 9639 / NBRC 100938).